The following is a 143-amino-acid chain: Transcriptional regulator MraZ (143 aa).

2 consecutive SpoVT-AbrB domains span residues 5–47 and 76–119; these read EYNH…SSDE and ASEC…SNVE.

It belongs to the MraZ family. As to quaternary structure, forms oligomers.

The protein localises to the cytoplasm. The protein resides in the nucleoid. This is Transcriptional regulator MraZ from Alkaliphilus oremlandii (strain OhILAs) (Clostridium oremlandii (strain OhILAs)).